A 109-amino-acid polypeptide reads, in one-letter code: Spermidine export protein MdtI (109 aa).

A run of 4 helical transmembrane segments spans residues 6–26 (WWHA…NILL), 36–56 (WMGI…AQAV), 63–83 (IAYA…GWIM), and 88–108 (LNYK…MIKM).

Belongs to the drug/metabolite transporter (DMT) superfamily. Small multidrug resistance (SMR) (TC 2.A.7.1) family. MdtI subfamily. Forms a complex with MdtJ.

It is found in the cell inner membrane. Functionally, catalyzes the excretion of spermidine. This chain is Spermidine export protein MdtI, found in Photorhabdus laumondii subsp. laumondii (strain DSM 15139 / CIP 105565 / TT01) (Photorhabdus luminescens subsp. laumondii).